The primary structure comprises 471 residues: Putative multidrug resistance protein MdtD (471 aa).

Over 1–11 the chain is Periplasmic; sequence MTDLPDSTRWQ. Residues 12 to 32 form a helical membrane-spanning segment; that stretch reads LWIVAFGFFMQSLDTTIVNTA. The Cytoplasmic portion of the chain corresponds to 33 to 48; sequence LPSMAQSLGESPLHMH. A helical membrane pass occupies residues 49–69; sequence MVIVSYVLTVAVMLPASGWLA. Over 70 to 76 the chain is Periplasmic; the sequence is DKVGVRN. A helical membrane pass occupies residues 77-97; that stretch reads IFFTAIVLFTLGSLFCALSGT. Residues 98-101 lie on the Cytoplasmic side of the membrane; the sequence is LNEL. Residues 102 to 124 traverse the membrane as a helical segment; the sequence is LLARALQGVGGAMMVPVGRLTVM. Residues 125 to 137 are Periplasmic-facing; that stretch reads KIVPREQYMAAMT. A helical membrane pass occupies residues 138-158; sequence FVTLPGQVGPLLGPALGGLLV. Residues 159-164 are Cytoplasmic-facing; that stretch reads EYASWH. A helical transmembrane segment spans residues 165–185; sequence WIFLINIPVGIIGAIATLMLM. The Periplasmic portion of the chain corresponds to 186-196; that stretch reads PNYTMQTRRFD. A helical membrane pass occupies residues 197–217; that stretch reads LSGFLLLAVGMAVLTLALDGS. The Cytoplasmic portion of the chain corresponds to 218–224; that stretch reads KGTGLSP. Residues 225–245 form a helical membrane-spanning segment; it reads LAITGLVAVGVVALVLYLLHA. The Periplasmic segment spans residues 246–262; that stretch reads RNNNRALFSLKLFRTRT. The chain crosses the membrane as a helical span at residues 263-283; that stretch reads FSLGLAGSFAGRIGSGMLPFM. Residues 284 to 285 lie on the Cytoplasmic side of the membrane; that stretch reads TP. The helical transmembrane segment at 286–306 threads the bilayer; the sequence is VFLQIGLGFSPFHAGLMMIPM. The Periplasmic segment spans residues 307-341; the sequence is VLGSMGMKRIVVQVVNRFGYRRVLVATTLGLSLVT. A helical membrane pass occupies residues 342 to 362; it reads LLFMTTALLGWYYVLPFVLFL. Topologically, residues 363–395 are cytoplasmic; that stretch reads QGMVNSTRFSSMNTLTLKDLPDNLASSGNSLLS. The chain crosses the membrane as a helical span at residues 396 to 416; the sequence is MIMQLSMSIGVTIAGLLLGLF. Residues 417-430 are Periplasmic-facing; the sequence is GSQHVSVDSSTTQT. A helical transmembrane segment spans residues 431–451; it reads VFMYTWLSMAFIIALPAFIFA. The Cytoplasmic portion of the chain corresponds to 452–471; the sequence is RVPNDTHQNVAISRRKRSAQ.

The protein belongs to the major facilitator superfamily. TCR/Tet family.

It is found in the cell inner membrane. The polypeptide is Putative multidrug resistance protein MdtD (Escherichia coli O157:H7).